The primary structure comprises 229 residues: Biosynthetic peptidoglycan transglycosylase (229 aa).

The chain crosses the membrane as a helical span at residues 11–31 (NLLLALFLVLVAGPVVAVILY).

It belongs to the glycosyltransferase 51 family.

The protein localises to the cell inner membrane. The enzyme catalyses [GlcNAc-(1-&gt;4)-Mur2Ac(oyl-L-Ala-gamma-D-Glu-L-Lys-D-Ala-D-Ala)](n)-di-trans,octa-cis-undecaprenyl diphosphate + beta-D-GlcNAc-(1-&gt;4)-Mur2Ac(oyl-L-Ala-gamma-D-Glu-L-Lys-D-Ala-D-Ala)-di-trans,octa-cis-undecaprenyl diphosphate = [GlcNAc-(1-&gt;4)-Mur2Ac(oyl-L-Ala-gamma-D-Glu-L-Lys-D-Ala-D-Ala)](n+1)-di-trans,octa-cis-undecaprenyl diphosphate + di-trans,octa-cis-undecaprenyl diphosphate + H(+). Its pathway is cell wall biogenesis; peptidoglycan biosynthesis. Functionally, peptidoglycan polymerase that catalyzes glycan chain elongation from lipid-linked precursors. This is Biosynthetic peptidoglycan transglycosylase from Caulobacter vibrioides (strain ATCC 19089 / CIP 103742 / CB 15) (Caulobacter crescentus).